The sequence spans 105 residues: SH3 domain-binding glutamic acid-rich-like protein 2 (105 aa).

Positions 61–67 (KGNPLPP) match the SH3-binding motif.

Belongs to the SH3BGR family.

The protein resides in the nucleus. In Danio rerio (Zebrafish), this protein is SH3 domain-binding glutamic acid-rich-like protein 2 (sh3bgrl2).